Consider the following 320-residue polypeptide: Cytochrome f (320 aa).

The first 35 residues, 1 to 35 (MENRKTFSWLKEQMIRSISVSIMIYVITRTSISNA), serve as a signal peptide directing secretion. Heme-binding residues include Tyr-36, Cys-56, Cys-59, and His-60. Residues 286-305 (VQGLLFFFASVILAQVFLVL) form a helical membrane-spanning segment.

It belongs to the cytochrome f family. In terms of assembly, the 4 large subunits of the cytochrome b6-f complex are cytochrome b6, subunit IV (17 kDa polypeptide, petD), cytochrome f and the Rieske protein, while the 4 small subunits are PetG, PetL, PetM and PetN. The complex functions as a dimer. The cofactor is heme.

It is found in the plastid. It localises to the chloroplast thylakoid membrane. In terms of biological role, component of the cytochrome b6-f complex, which mediates electron transfer between photosystem II (PSII) and photosystem I (PSI), cyclic electron flow around PSI, and state transitions. This is Cytochrome f (petA) from Zea mays (Maize).